Here is a 235-residue protein sequence, read N- to C-terminus: MOB kinase activator 2 (235 aa).

The disordered stretch occupies residues 1–22 (MDWLMGKSKAKPNGKKPAAEEK). Zn(2+)-binding residues include Cys-78, Cys-83, His-157, and His-162. The interval 213 to 235 (NSGATGDGANSGASGAQNHVKER) is disordered.

The protein belongs to the MOB1/phocein family. Binds STK38 and STK38L. Phosphorylated.

It is found in the nucleus. The protein localises to the cytoplasm. The protein resides in the perinuclear region. Functionally, stimulates the autophosphorylation and kinase activity of STK38 and STK38L. In Mus musculus (Mouse), this protein is MOB kinase activator 2 (Mob2).